The primary structure comprises 463 residues: Mitochondrial dynamics protein MID51 (463 aa).

Topologically, residues 1 to 23 are mitochondrial intermembrane; sequence MAGAGERKGKKDDNGIGTAIDFV. A helical transmembrane segment spans residues 24-46; the sequence is LSNARLVLGVGGAAMLGIATLAV. Residues 47–463 are Cytoplasmic-facing; the sequence is KRMYDRAISA…LSEPEVLLQT (417 aa). Residues 49-195 form a dimerization region; that stretch reads MYDRAISAPT…LSGSLYDDLQ (147 aa). 4 positions are modified to phosphoserine: S55, S59, S79, and S94. The disordered stretch occupies residues 57–79; the sequence is PTSPTRLSHSGKRSWEEPNWMGS. The interval 104 to 123 is disordered; that stretch reads AFDTDTFCPPRPKPVARKGQ. Residues 160–169 are important for interaction with DNM1L; that stretch reads AAVDICAELR. ADP is bound by residues S187, S189, and H201. Positions 234–243 are important for interaction with DNM1L; that stretch reads RRENPEYFPR. ADP contacts are provided by S340, R342, and K368.

The protein belongs to the MID49/MID51 family. Homodimer. Interacts with DNM1L.

Its subcellular location is the mitochondrion outer membrane. Functionally, mitochondrial outer membrane protein which regulates mitochondrial fission/fusion dynamics. Promotes the recruitment and association of the fission mediator dynamin-related protein 1 (DNM1L) to the mitochondrial surface independently of the mitochondrial fission FIS1 and MFF proteins. Regulates DNM1L GTPase activity and DNM1L oligomerization. Binds ADP and can also bind GDP, although with lower affinity. Does not bind CDP, UDP, ATP, AMP or GTP. Inhibits DNM1L GTPase activity in the absence of bound ADP. Requires ADP to stimulate DNM1L GTPase activity and the assembly of DNM1L into long, oligomeric tubules with a spiral pattern, as opposed to the ring-like DNM1L oligomers observed in the absence of bound ADP. Does not require ADP for its function in recruiting DNM1L. The chain is Mitochondrial dynamics protein MID51 (MIEF1) from Pongo abelii (Sumatran orangutan).